Reading from the N-terminus, the 361-residue chain is Phosphoserine aminotransferase (361 aa).

S9 and R42 together coordinate L-glutamate. Residues 76-77 (AR), W103, T153, D173, and Q196 each bind pyridoxal 5'-phosphate. K197 carries the N6-(pyridoxal phosphate)lysine modification. 238–239 (NT) contributes to the pyridoxal 5'-phosphate binding site.

It belongs to the class-V pyridoxal-phosphate-dependent aminotransferase family. SerC subfamily. Homodimer. Pyridoxal 5'-phosphate serves as cofactor.

It is found in the cytoplasm. It catalyses the reaction O-phospho-L-serine + 2-oxoglutarate = 3-phosphooxypyruvate + L-glutamate. The catalysed reaction is 4-(phosphooxy)-L-threonine + 2-oxoglutarate = (R)-3-hydroxy-2-oxo-4-phosphooxybutanoate + L-glutamate. It participates in amino-acid biosynthesis; L-serine biosynthesis; L-serine from 3-phospho-D-glycerate: step 2/3. Its pathway is cofactor biosynthesis; pyridoxine 5'-phosphate biosynthesis; pyridoxine 5'-phosphate from D-erythrose 4-phosphate: step 3/5. In terms of biological role, catalyzes the reversible conversion of 3-phosphohydroxypyruvate to phosphoserine and of 3-hydroxy-2-oxo-4-phosphonooxybutanoate to phosphohydroxythreonine. The polypeptide is Phosphoserine aminotransferase (Wigglesworthia glossinidia brevipalpis).